Consider the following 117-residue polypeptide: Biogenesis of lysosome-related organelles complex 1 subunit BLS1 (117 aa).

The tract at residues 97–117 (EGKAQDTEQAPGKGDRIFRSD) is disordered.

The protein belongs to the BLOC1S1 family. Component of the biogenesis of lysosome-related organelles complex-1 (BLOC-1).

It is found in the endosome. Functionally, component of the biogenesis of lysosome-related organelles complex-1 (BLOC-1), a complex involved in endosomal cargo sorting. The sequence is that of Biogenesis of lysosome-related organelles complex 1 subunit BLS1 (BLS1) from Eremothecium gossypii (strain ATCC 10895 / CBS 109.51 / FGSC 9923 / NRRL Y-1056) (Yeast).